A 245-amino-acid polypeptide reads, in one-letter code: 8-amino-3,8-dideoxy-manno-octulosonate cytidylyltransferase (245 aa).

This sequence belongs to the KdsB family.

It is found in the cytoplasm. It catalyses the reaction 8-amino-3,8-dideoxy-alpha-D-manno-octulosonate + CTP = CMP-8-amino-3,8-dideoxy-alpha-D-manno-oct-2-ulosonate + diphosphate. The protein operates within bacterial outer membrane biogenesis; lipopolysaccharide biosynthesis. In terms of biological role, activates KDO8N (a required 8-carbon sugar) for incorporation into bacterial lipopolysaccharide in the Shewanella genus. The sequence is that of 8-amino-3,8-dideoxy-manno-octulosonate cytidylyltransferase from Shewanella baltica (strain OS185).